The following is a 1706-amino-acid chain: Bifunctional hemolysin/adenylate cyclase (1706 aa).

Residues 1–399 are a, catalytic; that stretch reads MQQSHQAGYA…RRPSLGAVER (399 aa). 349–356 contacts ATP; it reads AYGVAGKS. A disordered region spans residues 383–405; it reads VPASPGLRRPSLGAVERQDSGYD. Residues 400–912 are b, Ala/Gly-rich; it reads QDSGYDSLDG…LKHSIKLDVI (513 aa). A required for interaction with CyaC region spans residues 500–698; that stretch reads LSAAVFGLGE…SVVGAPVAVV (199 aa). N6-palmitoyl lysine attachment occurs at residues K860 and K983. Residues 913–1656 are c; sequence GGDGDDVVLA…RDADHRVEII (744 aa). 17 Hemolysin-type calcium-binding repeats span residues 1014 to 1031, 1032 to 1049, 1050 to 1067, 1155 to 1172, 1173 to 1190, 1279 to 1296, 1297 to 1314, 1315 to 1332, 1335 to 1352, 1411 to 1428, 1429 to 1446, 1447 to 1464, 1468 to 1484, 1537 to 1554, 1555 to 1572, 1573 to 1590, and 1603 to 1620; these read IGGA…DNFL, AGGS…NDTL, VGGE…DDVF, WGHD…DDIL, RGGL…NDIF, MGQG…DDLL, FGGD…NDTL, YGGL…NDWF, TQAR…VDTV, TGDA…ADVL, AGGE…DDQL, SGDA…DDWF, AANA…RDTV, IGDA…NDVL, SGGA…SDLL, SGDA…DDTY, and ESGG…ADQL. The d, Asp/Gly-rich stretch occupies residues 1657–1706; it reads HAANQAVDQAGIEKLVEAMAQYPDPGAAAAAPPAARVPDTLMQSLAVNWR.

This sequence in the N-terminal section; belongs to the adenylyl cyclase class-2 family. The protein in the C-terminal section; belongs to the RTX prokaryotic toxin family. Released in a processed form. Post-translationally, palmitoylated at Lys-860 and Lys-983 by CyaC. The toxin only becomes active when modified in position Lys-983: palmitoylation is required for efficient membrane insertion and pore formation of the acylated Hemolysin chain.

Its subcellular location is the secreted. It localises to the host cell membrane. The catalysed reaction is ATP = 3',5'-cyclic AMP + diphosphate. Activated by host calmodulin. Bifunctional adenylate cyclase toxin-hemolysin that plays a crucial role in host colonization. It causes whooping cough by acting on mammalian cells by elevating cAMP-concentration and thus disrupts normal cell function. Its function is as follows. Adenylate cyclase that is activated by host intracellular calmodulin and catalyzes un-regulated conversion of ATP to cAMP, thereby impairing microbicidal functions of immune effector cells and inducing apoptosis of lung macrophages. In terms of biological role, hemolysin that forms small cation-selective membrane channels, leading to hemolytic activity. The hemolytic activity of CyaA is weak compared with that of the HlyA of E.coli. The chain is Bifunctional hemolysin/adenylate cyclase (cya) from Bordetella pertussis (strain Tohama I / ATCC BAA-589 / NCTC 13251).